A 187-amino-acid chain; its full sequence is Flavin prenyltransferase UbiX (187 aa).

Residues 9-11, Thr34, 88-91, and Arg123 contribute to the FMN site; these read GSS and SISS. Residues Tyr153 and Lys169 each coordinate dimethylallyl phosphate.

Belongs to the UbiX/PAD1 family.

The enzyme catalyses dimethylallyl phosphate + FMNH2 = prenylated FMNH2 + phosphate. Functionally, flavin prenyltransferase that catalyzes the synthesis of the prenylated FMN cofactor (prenyl-FMN) for 4-hydroxy-3-polyprenylbenzoic acid decarboxylase UbiD. The prenyltransferase is metal-independent and links a dimethylallyl moiety from dimethylallyl monophosphate (DMAP) to the flavin N5 and C6 atoms of FMN. This is Flavin prenyltransferase UbiX from Campylobacter jejuni subsp. jejuni serotype O:2 (strain ATCC 700819 / NCTC 11168).